A 555-amino-acid chain; its full sequence is Membrane protein insertase YidC (555 aa).

The helical transmembrane segment at 7 to 24 threads the bilayer; it reads ILWVIFSMSLVLLYDNWQ. 2 stretches are compositionally biased toward low complexity: residues 40-54 and 64-81; these read QQAA…TPQA and AAPG…QPVG. The interval 40–81 is disordered; it reads QQAAPAGAGGATPQADVPKANATNAAPGTVPAAPQAAAQPVG. 5 consecutive transmembrane segments (helical) span residues 334-354, 360-380, 430-450, 468-488, and 503-523; these read LELV…FWLL, FLGN…LVFF, LGGC…YWVL, LSVP…MFVQ, and VMMI…AGLV.

Belongs to the OXA1/ALB3/YidC family. Type 1 subfamily. Interacts with the Sec translocase complex via SecD. Specifically interacts with transmembrane segments of nascent integral membrane proteins during membrane integration.

The protein resides in the cell inner membrane. Required for the insertion and/or proper folding and/or complex formation of integral membrane proteins into the membrane. Involved in integration of membrane proteins that insert both dependently and independently of the Sec translocase complex, as well as at least some lipoproteins. Aids folding of multispanning membrane proteins. The chain is Membrane protein insertase YidC from Cupriavidus metallidurans (strain ATCC 43123 / DSM 2839 / NBRC 102507 / CH34) (Ralstonia metallidurans).